We begin with the raw amino-acid sequence, 185 residues long: Ribosome-recycling factor (185 aa).

This sequence belongs to the RRF family.

It localises to the cytoplasm. Responsible for the release of ribosomes from messenger RNA at the termination of protein biosynthesis. May increase the efficiency of translation by recycling ribosomes from one round of translation to another. The protein is Ribosome-recycling factor of Alcanivorax borkumensis (strain ATCC 700651 / DSM 11573 / NCIMB 13689 / SK2).